A 238-amino-acid polypeptide reads, in one-letter code: Probable solute-binding protein AdeT2 (238 aa).

This sequence belongs to the bacterial solute-binding protein 7 family.

Mediates antimicrobial resistance via active efflux. Contributes to resistance to antibiotics such as chloramphenicol, erythromycin and novobiocin. May be part of a tripartite ATP-independent periplasmic (TRAP) transport system. This Acinetobacter baumannii protein is Probable solute-binding protein AdeT2.